The following is a 1302-amino-acid chain: Serine-enriched protein (1302 aa).

One can recognise a BTB domain in the interval 40–158 (CDVTFLVGDT…IHTGCVTLQP (119 aa)). 8 disordered regions span residues 325 to 532 (SIDP…RSPT), 575 to 624 (PIPP…SVMR), 648 to 685 (FTRA…QKQM), 701 to 752 (YAKM…SSDE), 834 to 858 (FTRR…DSND), 1045 to 1090 (FQRS…RTEN), 1102 to 1163 (FSRA…GEEE), and 1187 to 1252 (VLTQ…SASP). Over residues 337-364 (RQHHRHRHHHQSLPKIRKAKSQSFRTRR) the composition is skewed to basic residues. Composition is skewed to polar residues over residues 378–388 (LTLNTSLTSGN), 410–430 (SPGS…TLRA), 437–449 (SGQL…TQGR), and 472–487 (GLRS…TVRS). The segment covering 589–623 (KSAEREREAAEAAAREKEKEKEKEAAQPQEKKSVM) has biased composition (basic and acidic residues). The segment covering 664-680 (STFSASPAASSTAAKSA) has biased composition (low complexity). Positions 713-723 (KRDDEEKEKQK) are enriched in basic and acidic residues. The segment covering 736–748 (DLSQTNADQQVGG) has biased composition (polar residues). Residues 836–855 (RRSESREPIEPRISEERESD) show a composition bias toward basic and acidic residues. Composition is skewed to low complexity over residues 1047–1056 (RSGSSCGGRK) and 1107–1128 (SPLS…SSGS). Over residues 1187–1207 (VLTQQLSTGSMSTPSGYTNGT) the composition is skewed to polar residues. The segment covering 1226-1252 (APLSSCGFSSGSEFEPPSPRRAASASP) has biased composition (low complexity).

The chain is Serine-enriched protein (gprs) from Drosophila melanogaster (Fruit fly).